The primary structure comprises 155 residues: Large ribosomal subunit protein uL11 (155 aa).

This sequence belongs to the universal ribosomal protein uL11 family. In terms of assembly, part of the ribosomal stalk of the 50S ribosomal subunit. Interacts with L10 and the large rRNA to form the base of the stalk. L10 forms an elongated spine to which L12 dimers bind in a sequential fashion forming a multimeric L10(L12)X complex. Post-translationally, one or more lysine residues are methylated.

Forms part of the ribosomal stalk which helps the ribosome interact with GTP-bound translation factors. The sequence is that of Large ribosomal subunit protein uL11 from Malacoplasma penetrans (strain HF-2) (Mycoplasma penetrans).